Reading from the N-terminus, the 310-residue chain is HPr kinase/phosphorylase (310 aa).

Catalysis depends on residues H138 and K159. Position 153 to 160 (153 to 160 (GKSGVGKS)) interacts with ATP. S160 provides a ligand contact to Mg(2+). D177 acts as the Proton acceptor; for phosphorylation activity. Proton donor; for dephosphorylation activity in catalysis. Residues 201-210 (LEIRGLGIIN) form an important for the catalytic mechanism of both phosphorylation and dephosphorylation region. E202 is a binding site for Mg(2+). Residue R243 is part of the active site. Residues 264-269 (PVRPGR) form an important for the catalytic mechanism of dephosphorylation region.

The protein belongs to the HPrK/P family. As to quaternary structure, homohexamer. Mg(2+) serves as cofactor.

The catalysed reaction is [HPr protein]-L-serine + ATP = [HPr protein]-O-phospho-L-serine + ADP + H(+). It catalyses the reaction [HPr protein]-O-phospho-L-serine + phosphate + H(+) = [HPr protein]-L-serine + diphosphate. Catalyzes the ATP- as well as the pyrophosphate-dependent phosphorylation of a specific serine residue in HPr, a phosphocarrier protein of the phosphoenolpyruvate-dependent sugar phosphotransferase system (PTS). HprK/P also catalyzes the pyrophosphate-producing, inorganic phosphate-dependent dephosphorylation (phosphorolysis) of seryl-phosphorylated HPr (P-Ser-HPr). The two antagonistic activities of HprK/P are regulated by several intracellular metabolites, which change their concentration in response to the absence or presence of rapidly metabolisable carbon sources (glucose, fructose, etc.) in the growth medium. Also phosphorylates/dephosphorylates the HPr-like catabolite repression protein crh on a specific serine residue. Therefore, by controlling the phosphorylation state of HPr and crh, HPrK/P is a sensor enzyme that plays a major role in the regulation of carbon metabolism and sugar transport: it mediates carbon catabolite repression (CCR), and regulates PTS-catalyzed carbohydrate uptake and inducer exclusion. The polypeptide is HPr kinase/phosphorylase (Bacillus licheniformis (strain ATCC 14580 / DSM 13 / JCM 2505 / CCUG 7422 / NBRC 12200 / NCIMB 9375 / NCTC 10341 / NRRL NRS-1264 / Gibson 46)).